We begin with the raw amino-acid sequence, 67 residues long: Conotoxin TsMMSK-B021 (67 aa).

The first 20 residues, 1–20, serve as a signal peptide directing secretion; it reads MMSKLGVLLTICLLLFPLTA. Positions 21-50 are excised as a propeptide; that stretch reads VQLDGDQPADLPELRAQDFAPERSPWFDPV. 3 disulfides stabilise this stretch: Cys-53/Cys-65, Cys-54/Cys-61, and Cys-58/Cys-64. Pro-63 bears the 4-hydroxyproline mark.

Belongs to the conotoxin M superfamily. In terms of tissue distribution, expressed by the venom duct.

The protein localises to the secreted. The protein is Conotoxin TsMMSK-B021 of Conus tessulatus (Tessellate cone).